Here is a 198-residue protein sequence, read N- to C-terminus: Recombination protein RecR (198 aa).

Residues 58 to 73 (CSVCNNLTEKDPCDFC) form a C4-type zinc finger. Residues 81 to 175 (NLICVVESPK…KVTRIAHGLP (95 aa)) form the Toprim domain.

The protein belongs to the RecR family.

In terms of biological role, may play a role in DNA repair. It seems to be involved in an RecBC-independent recombinational process of DNA repair. It may act with RecF and RecO. The polypeptide is Recombination protein RecR (Halothermothrix orenii (strain H 168 / OCM 544 / DSM 9562)).